Here is a 314-residue protein sequence, read N- to C-terminus: Methionyl-tRNA formyltransferase (314 aa).

112-115 (SLLP) contacts (6S)-5,6,7,8-tetrahydrofolate.

The protein belongs to the Fmt family.

It catalyses the reaction L-methionyl-tRNA(fMet) + (6R)-10-formyltetrahydrofolate = N-formyl-L-methionyl-tRNA(fMet) + (6S)-5,6,7,8-tetrahydrofolate + H(+). Attaches a formyl group to the free amino group of methionyl-tRNA(fMet). The formyl group appears to play a dual role in the initiator identity of N-formylmethionyl-tRNA by promoting its recognition by IF2 and preventing the misappropriation of this tRNA by the elongation apparatus. This chain is Methionyl-tRNA formyltransferase, found in Legionella pneumophila (strain Corby).